Reading from the N-terminus, the 854-residue chain is Protein ROOT HAIR DEFECTIVE 3 homolog 1 (854 aa).

Topologically, residues 1-680 (MDEAAAAEAV…QAHKRGNGRL (680 aa)) are cytoplasmic. A GB1/RHD3-type G domain is found at 37 to 252 (GLSYAVVSIM…IAPGGLAGDR (216 aa)). 47–54 (GPQSSGKS) provides a ligand contact to GTP. Residues 217–242 (ALPSFEEKEEQFREQVQQLRQRFSNS) adopt a coiled-coil conformation. Residues 681–701 (PPPWAMVAIAVLGFNEIMTLL) traverse the membrane as a helical segment. Topologically, residues 702–704 (RNP) are lumenal. The chain crosses the membrane as a helical span at residues 705–725 (IYLFLLFVGYLLVKALAVQLD). Residues 726-854 (INREFQNGVV…NESNNAYSIV (129 aa)) lie on the Cytoplasmic side of the membrane. 2 stretches are compositionally biased toward low complexity: residues 758-781 (TEQQ…QQQP) and 814-828 (VSPS…VTSP). The disordered stretch occupies residues 758 to 854 (TEQQQQQGHH…NESNNAYSIV (97 aa)). Residues 842 to 854 (QPDNESNNAYSIV) show a composition bias toward polar residues.

It belongs to the TRAFAC class dynamin-like GTPase superfamily. GB1/RHD3 GTPase family. RHD3 subfamily.

It is found in the endoplasmic reticulum membrane. In terms of biological role, probable GTP-binding protein that may be involved in cell development. In Oryza sativa subsp. japonica (Rice), this protein is Protein ROOT HAIR DEFECTIVE 3 homolog 1.